The following is a 366-amino-acid chain: MQVKDQLSLLQPYKPGKSPEQMKEVYGDHSFVKLASNENSFGCSPRVLDELQKSWLDHALYPDGGATTLRQTIANKLHVQMEQVLCGSGLDEVIQIISRAVLKAGDNIVTAGATFPQYRHHAIIEGCEVKEVALNNGVYDLDEISSVVDNNTKIVWICNPNNPTGTYVNDRKLTQFIEGISENTLIVIDEAYYEYVTAKDFPETLPLLEKHKNILVLRTFSKAYGLASFRVGYAVGHEELIEKLNVVRLPFNVSSLAQKAATIAFGDDEFIEEIVRVNTEGLRQYESFCKENEIPFYQSQTNFIFLPVENGGEIYEACAHAGFIIRPFPNGVRITVGTREQNEGVISVLQQHFENKKRKSRDEANV.

Positions 1-21 (MQVKDQLSLLQPYKPGKSPEQ) are disordered. An N6-(pyridoxal phosphate)lysine modification is found at Lys222.

It belongs to the class-II pyridoxal-phosphate-dependent aminotransferase family. Histidinol-phosphate aminotransferase subfamily. In terms of assembly, homodimer. Pyridoxal 5'-phosphate is required as a cofactor.

It carries out the reaction L-histidinol phosphate + 2-oxoglutarate = 3-(imidazol-4-yl)-2-oxopropyl phosphate + L-glutamate. It participates in amino-acid biosynthesis; L-histidine biosynthesis; L-histidine from 5-phospho-alpha-D-ribose 1-diphosphate: step 7/9. This is Histidinol-phosphate aminotransferase 2 from Bacillus cereus (strain ZK / E33L).